A 329-amino-acid polypeptide reads, in one-letter code: MQGSVIEFLKPHLVNIEQISSTHAKVTLEPLERGFGHTLGNALRRILLSSMPGCAVAEVEIDGVLHEYSSKEGVQEDILEVLLNLKGLAVKVSGKNDVTLTLNKSGIGPVLAADITHDGDVEIINPNHVICHLTDKDASINMRIYVQRGRGYVPASARVHSQDEDRPIGRLLVDARFSPVDRIAYNVEAARVEQRTDLDKLIIDMETNGTIDPEEAIRRAATILAEQLDAFVDLRDVRQPEIKEEKPEFDPILLRPVDDLELTVRSANCLKAETIHYIGDLVQRTEVELLKTPNLGKKSLTEIKDVLASRGLSLGMRLENWPPASIAED.

Residues 1-235 (MQGSVIEFLK…EQLDAFVDLR (235 aa)) are alpha N-terminal domain (alpha-NTD). Residues 249–329 (FDPILLRPVD…NWPPASIAED (81 aa)) form an alpha C-terminal domain (alpha-CTD) region.

This sequence belongs to the RNA polymerase alpha chain family. In terms of assembly, homodimer. The RNAP catalytic core consists of 2 alpha, 1 beta, 1 beta' and 1 omega subunit. When a sigma factor is associated with the core the holoenzyme is formed, which can initiate transcription.

It catalyses the reaction RNA(n) + a ribonucleoside 5'-triphosphate = RNA(n+1) + diphosphate. In terms of biological role, DNA-dependent RNA polymerase catalyzes the transcription of DNA into RNA using the four ribonucleoside triphosphates as substrates. The polypeptide is DNA-directed RNA polymerase subunit alpha (Haemophilus ducreyi (strain 35000HP / ATCC 700724)).